The primary structure comprises 885 residues: Protein arg11, mitochondrial (885 aa).

A mitochondrion-targeting transit peptide spans 1-59 (MLIELQQIVKSGLVRNGAKHCTKRSLLCSNASVIASKRFQGSFAPGQQQPLNPLAKPIE). One can recognise an N-acetyltransferase domain in the interval 346 to 499 (FVINKHDSLD…SDKPFADAII (154 aa)). Residues 503-523 (STKPPTASSTTNNPSSSQINQ) show a composition bias toward low complexity. The interval 503 to 532 (STKPPTASSTTNNPSSSQINQKRSYSTSSL) is disordered. Cys-703 is a catalytic residue.

The protein in the N-terminal section; belongs to the acetylglutamate kinase family. In the C-terminal section; belongs to the NAGSA dehydrogenase family. Post-translationally, the protein precursor is probably cleaved into the two biologically active enzymes, the kinase and the reductase.

Its subcellular location is the mitochondrion. It catalyses the reaction N-acetyl-L-glutamate 5-semialdehyde + phosphate + NADP(+) = N-acetyl-L-glutamyl 5-phosphate + NADPH + H(+). It carries out the reaction N-acetyl-L-glutamate + ATP = N-acetyl-L-glutamyl 5-phosphate + ADP. Its pathway is amino-acid biosynthesis; L-arginine biosynthesis; N(2)-acetyl-L-ornithine from L-glutamate: step 2/4. It functions in the pathway amino-acid biosynthesis; L-arginine biosynthesis; N(2)-acetyl-L-ornithine from L-glutamate: step 3/4. With respect to regulation, the kinase activity is inhibited by arginine. The polypeptide is Protein arg11, mitochondrial (arg11) (Schizosaccharomyces pombe (strain 972 / ATCC 24843) (Fission yeast)).